Consider the following 449-residue polypeptide: Glutamyl-tRNA reductase (449 aa).

Substrate-binding positions include 58–61 (TCNR), Ser-121, 126–128 (ETQ), and Gln-132. Residue Cys-59 is the Nucleophile of the active site. Residue 203–208 (GLGEMA) participates in NADP(+) binding.

The protein belongs to the glutamyl-tRNA reductase family. As to quaternary structure, homodimer.

It carries out the reaction (S)-4-amino-5-oxopentanoate + tRNA(Glu) + NADP(+) = L-glutamyl-tRNA(Glu) + NADPH + H(+). Its pathway is porphyrin-containing compound metabolism; protoporphyrin-IX biosynthesis; 5-aminolevulinate from L-glutamyl-tRNA(Glu): step 1/2. Catalyzes the NADPH-dependent reduction of glutamyl-tRNA(Glu) to glutamate 1-semialdehyde (GSA). This Helicobacter pylori (strain P12) protein is Glutamyl-tRNA reductase.